A 441-amino-acid chain; its full sequence is Trigger factor (441 aa).

The PPIase FKBP-type domain occupies 161–246; that stretch reads GDMVTVDFQG…VKDVKERILA (86 aa).

This sequence belongs to the FKBP-type PPIase family. Tig subfamily.

It is found in the cytoplasm. The catalysed reaction is [protein]-peptidylproline (omega=180) = [protein]-peptidylproline (omega=0). Functionally, involved in protein export. Acts as a chaperone by maintaining the newly synthesized protein in an open conformation. Functions as a peptidyl-prolyl cis-trans isomerase. The polypeptide is Trigger factor (Desulfotalea psychrophila (strain LSv54 / DSM 12343)).